Consider the following 867-residue polypeptide: MDLMSFILLWAGLMKVAEASIAQFSQLGASAPGNIIIGGLFPIHEAVVPVNYTGNNSISAPEHPDCIRFYTKGLNQALAMINAVEMANKSPMLSSLNITLGYRIYDTCSDVTTALRAVHDIMRPFSDCESPEDSSQPVQPIMAVIGTTSSEISIAVARDLNLQMIPQISYASTATILSDKSRFPAFMRTVPSDEYQTCAMAKLLKSNKWSWVGIIITDGDYGRSALEGFIQHTETEGICIAFKAILPDSLADQQKLNTDIENTLNIIENNPKVRVVISFAKSSQMQLLFKGLQSRNISNNMVWVASDNWSTAKHILNDGSITDIGKVLGFTFKSGNFTSFHQYLKNLQFESEDEMNNSFLKEFLKLNAGNASNTVLELMKSTNLDKIFSIEMAVTAVANAVAKLCAERQCQDSTALQPWELLRQLRSITFENGGEMYKFDANGDINLGYDLFLWEGDQSDEHADDIIAEYDPTKGGFHYIHNDLSEIKKVVSRCSNSCQPGQYKKTAEGQHTCCYECLTCVENHYSNITDADECSPCDSESMWSLANSTECHPKVFEYFDWNSGFAIVLLILAALGVLLLFFMSALFFWQRHSPVVKAAGGPLCHLILVSLLGSFISVVFFVGEPSDLTCRARQVIFGFSFTLCVSCILVKSLKILLAFEMNFELKELLCMLYKPYMIVSVGMGVQIIICTVWLTLYKPFKDKEVQTESILLECNEGFYVMFWLMLGYIALLALFCFTFAYIGRKLPQKYNEAKFITFSMVICLMAWIIFIPIHVTTSGKYVPAVEMVVILISNYGILSCHFLPKSYIILFKKEHNTKDAFMKNVYEYARKSAENIKGLTGTEPQFKQENSVYTISNLSFVPEEKHE.

A signal peptide spans 1–19 (MDLMSFILLWAGLMKVAEA). Residues 20-566 (SIAQFSQLGA…EYFDWNSGFA (547 aa)) lie on the Extracellular side of the membrane. 10 N-linked (GlcNAc...) asparagine glycosylation sites follow: N51, N55, N97, N296, N308, N336, N356, N370, N527, and N547. The helical transmembrane segment at 567–587 (IVLLILAALGVLLLFFMSALF) threads the bilayer. The Cytoplasmic segment spans residues 588-602 (FWQRHSPVVKAAGGP). Residues 603 to 623 (LCHLILVSLLGSFISVVFFVG) form a helical membrane-spanning segment. Residues 624–634 (EPSDLTCRARQ) are Extracellular-facing. A helical membrane pass occupies residues 635-655 (VIFGFSFTLCVSCILVKSLKI). Over 656–675 (LLAFEMNFELKELLCMLYKP) the chain is Cytoplasmic. A helical membrane pass occupies residues 676-696 (YMIVSVGMGVQIIICTVWLTL). Topologically, residues 697–716 (YKPFKDKEVQTESILLECNE) are extracellular. The chain crosses the membrane as a helical span at residues 717 to 737 (GFYVMFWLMLGYIALLALFCF). Residues 738-754 (TFAYIGRKLPQKYNEAK) lie on the Cytoplasmic side of the membrane. Residues 755-775 (FITFSMVICLMAWIIFIPIHV) form a helical membrane-spanning segment. Residues 776-781 (TTSGKY) are Extracellular-facing. The helical transmembrane segment at 782-802 (VPAVEMVVILISNYGILSCHF) threads the bilayer. Residues 803 to 867 (LPKSYIILFK…LSFVPEEKHE (65 aa)) lie on the Cytoplasmic side of the membrane.

Belongs to the G-protein coupled receptor 3 family. Homodimer; disulfide-linked.

Its subcellular location is the cell membrane. Functionally, olfactory receptor that is activated by amino acids that act as potent odorants in fish. Displays preference for acidic amino acids such as Glu over basic amino acids. The sequence is that of G-protein coupled receptor family C group 6 member A (gprc6a) from Danio rerio (Zebrafish).